The primary structure comprises 1299 residues: DNA-directed RNA polymerase subunit beta' (1299 aa).

Zn(2+) contacts are provided by C60, C62, C75, and C78. The segment at 385–405 (GRRGRPVTGPGNRPLKSLSDM) is disordered. Residues D535, D537, and D539 each contribute to the Mg(2+) site. Zn(2+)-binding residues include C886, C962, C969, and C972.

It belongs to the RNA polymerase beta' chain family. As to quaternary structure, the RNAP catalytic core consists of 2 alpha, 1 beta, 1 beta' and 1 omega subunit. When a sigma factor is associated with the core the holoenzyme is formed, which can initiate transcription. The cofactor is Mg(2+). Requires Zn(2+) as cofactor.

The enzyme catalyses RNA(n) + a ribonucleoside 5'-triphosphate = RNA(n+1) + diphosphate. In terms of biological role, DNA-dependent RNA polymerase catalyzes the transcription of DNA into RNA using the four ribonucleoside triphosphates as substrates. This chain is DNA-directed RNA polymerase subunit beta', found in Streptomyces coelicolor (strain ATCC BAA-471 / A3(2) / M145).